A 508-amino-acid polypeptide reads, in one-letter code: GMP synthase [glutamine-hydrolyzing] (508 aa).

A Glutamine amidotransferase type-1 domain is found at 1-189 (MILVLDFGSQ…ALLVCGCEKT (189 aa)). Cys-78 serves as the catalytic Nucleophile. Catalysis depends on residues His-163 and Glu-165. Residues 190 to 383 (WGMQHFAQRE…LGVSQDFLMH (194 aa)) enclose the GMPS ATP-PPase domain. 217–223 (SGGVDST) provides a ligand contact to ATP.

Homodimer.

It catalyses the reaction XMP + L-glutamine + ATP + H2O = GMP + L-glutamate + AMP + diphosphate + 2 H(+). Its pathway is purine metabolism; GMP biosynthesis; GMP from XMP (L-Gln route): step 1/1. In terms of biological role, catalyzes the synthesis of GMP from XMP. In Helicobacter pylori (strain G27), this protein is GMP synthase [glutamine-hydrolyzing].